Here is a 553-residue protein sequence, read N- to C-terminus: Glucose-6-phosphate isomerase (553 aa).

Glu-357 functions as the Proton donor in the catalytic mechanism. Active-site residues include His-388 and Lys-514. The interval 524 to 553 (ITGAGSPPPQSDSSTDGLVRRYRTERGRAG) is disordered. Over residues 541-553 (LVRRYRTERGRAG) the composition is skewed to basic and acidic residues.

Belongs to the GPI family.

Its subcellular location is the cytoplasm. It catalyses the reaction alpha-D-glucose 6-phosphate = beta-D-fructose 6-phosphate. The protein operates within carbohydrate biosynthesis; gluconeogenesis. Its pathway is carbohydrate degradation; glycolysis; D-glyceraldehyde 3-phosphate and glycerone phosphate from D-glucose: step 2/4. In terms of biological role, catalyzes the reversible isomerization of glucose-6-phosphate to fructose-6-phosphate. The sequence is that of Glucose-6-phosphate isomerase from Mycobacterium bovis (strain BCG / Tokyo 172 / ATCC 35737 / TMC 1019).